A 445-amino-acid chain; its full sequence is UDP-N-acetylmuramoylalanine--D-glutamate ligase (445 aa).

Residue 117–123 coordinates ATP; sequence GSNGKTT.

The protein belongs to the MurCDEF family.

Its subcellular location is the cytoplasm. The catalysed reaction is UDP-N-acetyl-alpha-D-muramoyl-L-alanine + D-glutamate + ATP = UDP-N-acetyl-alpha-D-muramoyl-L-alanyl-D-glutamate + ADP + phosphate + H(+). It participates in cell wall biogenesis; peptidoglycan biosynthesis. Cell wall formation. Catalyzes the addition of glutamate to the nucleotide precursor UDP-N-acetylmuramoyl-L-alanine (UMA). In Neisseria gonorrhoeae (strain NCCP11945), this protein is UDP-N-acetylmuramoylalanine--D-glutamate ligase.